The chain runs to 442 residues: C4-dicarboxylate transport protein (442 aa).

Transmembrane regions (helical) follow at residues 10-30 (VQVL…PSFG), 40-60 (FIKL…VSGI), 77-97 (LIYF…VANI), 149-169 (LLQV…LGTL), 185-205 (FVIL…AMAF), 221-241 (LMVA…GLIA), 288-308 (VVGL…SIYL), and 354-374 (AATL…ILGI). A disordered region spans residues 420–442 (PATPEVAAEERGEGRGLDGPLPA).

Belongs to the dicarboxylate/amino acid:cation symporter (DAACS) (TC 2.A.23) family.

It localises to the cell membrane. In terms of biological role, responsible for the transport of dicarboxylates such as succinate, fumarate, and malate across the membrane. The sequence is that of C4-dicarboxylate transport protein from Deinococcus geothermalis (strain DSM 11300 / CIP 105573 / AG-3a).